The chain runs to 404 residues: Inner membrane transport protein YdiM (404 aa).

Residues 1–5 (MKNPY) lie on the Periplasmic side of the membrane. A helical membrane pass occupies residues 6–26 (FPTALGLYFNYLVHGMGVLLM). Residues 27–43 (SLNMASLETLWQTNAAG) are Cytoplasmic-facing. A helical membrane pass occupies residues 44–64 (VSIVISSLGIGRLSVLLFAGL). Topologically, residues 65-84 (LSDRFGRRPFIMLGMCCYMA) are periplasmic. The helical transmembrane segment at 85–105 (FFFGILQTNNIIIAYVFGFLA) threads the bilayer. The Cytoplasmic portion of the chain corresponds to 106 to 132 (GMANSFLDAGTYPSLMEAFPRSPGTAN). The helical transmembrane segment at 133 to 153 (ILIKAFVSSGQFLLPLIISLL) threads the bilayer. Topologically, residues 154-157 (VWAE) are periplasmic. A helical membrane pass occupies residues 158–178 (LWFGWSFMIAAGIMFINALFL). Topologically, residues 179 to 206 (YRCTFPPHPGRRLPVIKKTTSSTEHRCS) are cytoplasmic. The chain crosses the membrane as a helical span at residues 207–227 (IIDLASYTLYGYISMATFYLV). The Periplasmic portion of the chain corresponds to 228–246 (SQWLAQYGQFVAGMSYTMS). Residues 247–267 (IKLLSIYTVGSLLCVFITAPL) form a helical membrane-spanning segment. The Cytoplasmic segment spans residues 268-273 (IRNTVR). A helical membrane pass occupies residues 274–294 (PTTLLMLYTFISFIALFTVCL). Topologically, residues 295–296 (HP) are periplasmic. The helical transmembrane segment at 297-317 (TFYVVIIFAFVIGFTSAGGVV) threads the bilayer. The Cytoplasmic segment spans residues 318–336 (QIGLTLMAERFPYAKGKAT). A helical transmembrane segment spans residues 337–357 (GIYYSAGSIATFTIPLITAHL). The Periplasmic portion of the chain corresponds to 358–364 (SQRSIAD). The chain crosses the membrane as a helical span at residues 365-385 (IMWFDTAIAAIGFLLALFIGL). The Cytoplasmic segment spans residues 386–404 (RSRKKTRHHSLKENVAPGG).

Belongs to the major facilitator superfamily.

Its subcellular location is the cell inner membrane. The polypeptide is Inner membrane transport protein YdiM (ydiM) (Escherichia coli (strain K12)).